A 181-amino-acid chain; its full sequence is Succinate dehydrogenase [ubiquinone] cytochrome b small subunit, mitochondrial (181 aa).

Residues 1–31 constitute a mitochondrion transit peptide; sequence MMLPRSMKFMTGRRIFHTATVRAFQSTAKKS. The Mitochondrial matrix portion of the chain corresponds to 32 to 66; sequence LTIPFLPVLPQKPGGVRGTPNDAYVPPPENKLEGS. Residues 67 to 88 traverse the membrane as a helical segment; it reads YHWYMEKIFALSVVPLATTAML. The Mitochondrial intermembrane portion of the chain corresponds to 89 to 98; sequence TTGPLSTAAD. Residues 99 to 118 traverse the membrane as a helical segment; it reads SFFSVMLLGYCYMEFNSCIT. C109 serves as a coordination point for heme. Residues 119 to 127 lie on the Mitochondrial matrix side of the membrane; that stretch reads DYISERVYG. Y120 contacts a ubiquinone. The chain crosses the membrane as a helical span at residues 128-148; it reads VWHKYAMYMLGLGSAVSLFGI. The Mitochondrial intermembrane portion of the chain corresponds to 149 to 181; sequence YKLETENDGVVGLVKSLWDSSEKDNSQKIEAKK.

Belongs to the CybS family. As to quaternary structure, forms part of complex II containing four subunits: a flavoprotein (FP), an iron-sulfur protein (IP) and a cytochrome b composed of a large and a small subunit.

The protein resides in the mitochondrion inner membrane. It participates in carbohydrate metabolism; tricarboxylic acid cycle. Its function is as follows. Membrane-anchoring subunit of succinate dehydrogenase (SDH) that is involved in system II of the mitochondrial electron transport chain and is responsible for transferring electrons from succinate to ubiquinone (coenzyme Q). SDH3 and SDH4 form the membrane dimer that anchors the catalytic dimer formed by SDH1 and SDH2 to the matrix surface of the mitochondrial inner membrane. Electrons originating from the catalytic dimer enter the membrane dimer for ubiquinone reduction. The protein is Succinate dehydrogenase [ubiquinone] cytochrome b small subunit, mitochondrial (SDH4) of Saccharomyces cerevisiae (strain ATCC 204508 / S288c) (Baker's yeast).